The following is a 437-amino-acid chain: GTPase Obg (437 aa).

Residues 2–160 (SMFLDTAKIS…RQLELELKIL (159 aa)) form the Obg domain. An OBG-type G domain is found at 161–338 (ADVGLVGFPS…LLEATAELLA (178 aa)). GTP contacts are provided by residues 167–174 (GFPSVGKS), 192–196 (FTTIV), 214–217 (DLPG), 284–287 (NKMD), and 319–321 (SSL). Mg(2+) contacts are provided by serine 174 and threonine 194. The 79-residue stretch at 359 to 437 (GFAEAEKEFE…IGKFEFEFVD (79 aa)) folds into the OCT domain.

It belongs to the TRAFAC class OBG-HflX-like GTPase superfamily. OBG GTPase family. In terms of assembly, monomer. It depends on Mg(2+) as a cofactor.

The protein resides in the cytoplasm. Functionally, an essential GTPase which binds GTP, GDP and possibly (p)ppGpp with moderate affinity, with high nucleotide exchange rates and a fairly low GTP hydrolysis rate. Plays a role in control of the cell cycle, stress response, ribosome biogenesis and in those bacteria that undergo differentiation, in morphogenesis control. In Streptococcus pyogenes serotype M3 (strain ATCC BAA-595 / MGAS315), this protein is GTPase Obg.